A 1457-amino-acid chain; its full sequence is DNA-directed RNA polymerase III subunit RPC1 (1457 aa).

7 residues coordinate Zn(2+): Cys-67, Cys-70, Cys-77, His-80, Cys-107, Cys-110, and Cys-154. The Mg(2+) site is built by Asp-508, Asp-510, and Asp-512. Residues 854 to 866 (PPEFLFHSISGRE) form a bridging helix region.

This sequence belongs to the RNA polymerase beta' chain family. In terms of assembly, component of the RNA polymerase III (Pol III) complex consisting of 17 subunits.

Its subcellular location is the nucleus. It catalyses the reaction RNA(n) + a ribonucleoside 5'-triphosphate = RNA(n+1) + diphosphate. Functionally, DNA-dependent RNA polymerase catalyzes the transcription of DNA into RNA using the four ribonucleoside triphosphates as substrates. Largest and catalytic core component of RNA polymerase III which synthesizes small RNAs, such as 5S rRNA and tRNAs. Forms the polymerase active center together with the second largest subunit. A single-stranded DNA template strand of the promoter is positioned within the central active site cleft of Pol III. A bridging helix emanates from RPC1 and crosses the cleft near the catalytic site and is thought to promote translocation of Pol III by acting as a ratchet that moves the RNA-DNA hybrid through the active site by switching from straight to bent conformations at each step of nucleotide addition. The sequence is that of DNA-directed RNA polymerase III subunit RPC1 (RPC1) from Debaryomyces hansenii (strain ATCC 36239 / CBS 767 / BCRC 21394 / JCM 1990 / NBRC 0083 / IGC 2968) (Yeast).